A 349-amino-acid chain; its full sequence is Anthranilate phosphoribosyltransferase (349 aa).

Residues G87, 90–91, T95, 97–100, 115–123, and S127 each bind 5-phospho-alpha-D-ribose 1-diphosphate; these read GD, NIST, and KHGNRSVSS. G87 is a binding site for anthranilate. S99 contacts Mg(2+). An anthranilate-binding site is contributed by N118. Residue R173 participates in anthranilate binding. 2 residues coordinate Mg(2+): D231 and E232.

It belongs to the anthranilate phosphoribosyltransferase family. Homodimer. Requires Mg(2+) as cofactor.

It catalyses the reaction N-(5-phospho-beta-D-ribosyl)anthranilate + diphosphate = 5-phospho-alpha-D-ribose 1-diphosphate + anthranilate. It participates in amino-acid biosynthesis; L-tryptophan biosynthesis; L-tryptophan from chorismate: step 2/5. Functionally, catalyzes the transfer of the phosphoribosyl group of 5-phosphorylribose-1-pyrophosphate (PRPP) to anthranilate to yield N-(5'-phosphoribosyl)-anthranilate (PRA). The polypeptide is Anthranilate phosphoribosyltransferase (Shewanella loihica (strain ATCC BAA-1088 / PV-4)).